The primary structure comprises 242 residues: MIFSNNKKLKFKRVIIKLSGEALQGVHKFGIDIIELNRIAKEIKAIFDLGVQIGIVIGGGNIFRGKKLAKFGINKVISDYVGMLSTIMNGLLLCDSMDLVHLSSCLMSSICIDKICEQYSFKKALSLLRRNKVVVFSGGLGNPFFTTDSAACLRAIEMRADIVLKGTKVNGVYSSDPKKSSNSILYKNISYNEVLQKELKVMDLAAFALARDHKLPICIFNINKPNALYYIVTGQKEGTLIR.

Position 17–20 (17–20 (KLSG)) interacts with ATP. UMP is bound at residue glycine 59. ATP is bound by residues glycine 60 and arginine 64. Residues aspartate 79 and 140 to 147 (LGNPFFTT) each bind UMP. Residues threonine 167, tyrosine 173, and aspartate 176 each contribute to the ATP site.

Belongs to the UMP kinase family. Homohexamer.

Its subcellular location is the cytoplasm. The catalysed reaction is UMP + ATP = UDP + ADP. The protein operates within pyrimidine metabolism; CTP biosynthesis via de novo pathway; UDP from UMP (UMPK route): step 1/1. Inhibited by UTP. Functionally, catalyzes the reversible phosphorylation of UMP to UDP. This is Uridylate kinase from Buchnera aphidicola subsp. Baizongia pistaciae (strain Bp).